The chain runs to 517 residues: Maturase K (517 aa).

The protein belongs to the intron maturase 2 family. MatK subfamily.

The protein localises to the plastid. It is found in the chloroplast. Usually encoded in the trnK tRNA gene intron. Probably assists in splicing its own and other chloroplast group II introns. In Dracula chimaera, this protein is Maturase K.